Reading from the N-terminus, the 335-residue chain is NADH-quinone oxidoreductase subunit H (335 aa).

8 consecutive transmembrane segments (helical) span residues 11–31, 81–101, 114–134, 154–174, 187–207, 238–258, 270–290, and 307–327; these read VILT…CGAL, VIFT…FVVI, IGLL…LFAG, VSYE…VGSF, LWFI…GVAV, FFVG…TLFF, QLSF…FILL, and WKFC…IVLY.

Belongs to the complex I subunit 1 family. As to quaternary structure, NDH-1 is composed of 13 different subunits. Subunits NuoA, H, J, K, L, M, N constitute the membrane sector of the complex.

It is found in the cell inner membrane. It catalyses the reaction a quinone + NADH + 5 H(+)(in) = a quinol + NAD(+) + 4 H(+)(out). In terms of biological role, NDH-1 shuttles electrons from NADH, via FMN and iron-sulfur (Fe-S) centers, to quinones in the respiratory chain. The immediate electron acceptor for the enzyme in this species is believed to be ubiquinone. Couples the redox reaction to proton translocation (for every two electrons transferred, four hydrogen ions are translocated across the cytoplasmic membrane), and thus conserves the redox energy in a proton gradient. This subunit may bind ubiquinone. The sequence is that of NADH-quinone oxidoreductase subunit H from Pseudomonas putida (strain ATCC 700007 / DSM 6899 / JCM 31910 / BCRC 17059 / LMG 24140 / F1).